We begin with the raw amino-acid sequence, 2322 residues long: Protein sidekick homolog (2322 aa).

An N-terminal signal peptide occupies residues 1 to 26 (MNYRIFLLFCTTTVLWSVVSTQLVLG). At 27-2020 (KPPIFQNTGP…IPDDPFYTTW (1994 aa)) the chain is on the extracellular side. 3 Ig-like C2-type domains span residues 28–105 (PPIF…AAIS), 217–319 (PSLQ…AYLT), and 324–397 (PVLK…ADMS). Intrachain disulfides connect cysteine 52-cysteine 94, cysteine 247-cysteine 301, and cysteine 345-cysteine 386. Asparagine 408 carries an N-linked (GlcNAc...) asparagine glycan. Ig-like C2-type domains lie at 450–545 (PFTS…VQVN) and 548–639 (SLIE…AMLQ). Intrachain disulfides connect cysteine 481–cysteine 529 and cysteine 569–cysteine 623. N-linked (GlcNAc...) asparagine glycans are attached at residues asparagine 633 and asparagine 656. 13 consecutive Fibronectin type-III domains span residues 646–752 (MPER…MPQQ), 757–854 (APRN…TAEG), 859–958 (APKN…TEED), 962–1056 (AVDE…VPPE), 1060–1155 (RPSM…TLQT), 1160–1255 (PSQR…TYES), 1260–1360 (SPRN…TLED), 1364–1458 (PPES…SSVR), 1464–1567 (APAP…TLPS), 1572–1672 (QPIS…VGYS), 1674–1774 (PKRN…LEDK), 1777–1873 (PVGV…SKDG), and 1908–2010 (QAKR…VPES). Residues 732-762 (SNKHGPGKPSLPSSSVTMPQQPPSAAPRNVA) form a disordered region. 4 N-linked (GlcNAc...) asparagine glycosylation sites follow: asparagine 808, asparagine 869, asparagine 933, and asparagine 1017. A compositionally biased stretch (basic and acidic residues) spans 1040-1049 (GDGPVEETKF). Positions 1040–1060 (GDGPVEETKFESGVPPELPGR) are disordered. An N-linked (GlcNAc...) asparagine glycan is attached at asparagine 1108. Residues 1139–1163 (GRGAPSEPSRTFETLQTNPETPSQR) are disordered. Residues 1146 to 1163 (PSRTFETLQTNPETPSQR) show a composition bias toward polar residues. N-linked (GlcNAc...) asparagine glycans are attached at residues asparagine 1615, asparagine 1677, and asparagine 1864. Residues 1916–1965 (EETENGYVSQRPRRNEIRGAKSAAQTSASSNSNRPTHPIGEWITLRPTDG) form a disordered region. A compositionally biased stretch (low complexity) spans 1935–1947 (AKSAAQTSASSNS). A helical transmembrane segment spans residues 2021–2041 (WFMALVAMAAFVLIVIIIAIL). The Cytoplasmic portion of the chain corresponds to 2042-2322 (CVTGSSAKYR…NLTAGFSSFV (281 aa)). 3 disordered regions span residues 2081–2114 (NMTR…SVLG), 2167–2254 (YVVS…ADDI), and 2276–2322 (MVRA…SSFV). Residues 2092–2101 (PGTTQSWLSD) show a composition bias toward polar residues. The span at 2207–2223 (PSSSGGSQPQGSPQQQQ) shows a compositional bias: low complexity. Residues 2227–2238 (DSFDEEDDVDDD) show a composition bias toward acidic residues. 2 stretches are compositionally biased toward polar residues: residues 2282–2302 (LTNQ…STSE) and 2310–2322 (ATPN…SSFV).

The protein belongs to the sidekick family.

The protein localises to the membrane. Cell adhesion protein. This chain is Protein sidekick homolog (rig-4), found in Caenorhabditis briggsae.